A 1046-amino-acid polypeptide reads, in one-letter code: Translation initiation factor IF-2 (1046 aa).

The interval 49 to 448 is disordered; the sequence is EAFPAEGSAP…MGAMVPRGNG (400 aa). The segment covering 52 to 71 has biased composition (low complexity); sequence PAEGSAPSSRPGGRPGNGAR. The segment covering 94–111 has biased composition (pro residues); the sequence is RPGPGGRPVPGRPGPAPL. Low complexity-rich tracts occupy residues 112 to 139 and 147 to 159; these read PGASRPSTPTAAPQSQPAQTQPPQSQPV and PRPAAAAASAAAP. Residues 160 to 176 are compositionally biased toward pro residues; it reads APAPSAPAPAPSAPAPA. Residues 177–187 show a composition bias toward low complexity; the sequence is PITSAPTAATP. Residues 188-206 are compositionally biased toward pro residues; the sequence is PAAPQRPTPGGPRPGPAAP. The span at 210 to 222 shows a compositional bias: gly residues; that stretch reads RTGGPGGPGGPGG. Pro residues predominate over residues 223–235; sequence GPRPGPRPGPRPA. Low complexity predominate over residues 244 to 253; the sequence is SPAAGPRAAS. Pro residues-rich tracts occupy residues 260–281 and 304–314; these read SAPPRPGAPRPGGPRPGGPRPG and RPTPGQMPPRP. Over residues 320–333 the composition is skewed to low complexity; that stretch reads PRPNSNMFQPRPAG. Positions 334-414 are enriched in gly residues; sequence GAPGRPGGGG…AGAFGPGGRG (81 aa). Residues 415–426 show a composition bias toward basic residues; the sequence is RPGRQRKSKRAK. The 173-residue stretch at 539 to 711 folds into the tr-type G domain; the sequence is ARPPVVTVMG…VILTADASLD (173 aa). The tract at residues 548 to 555 is G1; that stretch reads GHVDHGKT. 548–555 contributes to the GTP binding site; it reads GHVDHGKT. Residues 573–577 are G2; that stretch reads GITQH. The tract at residues 598–601 is G3; sequence DTPG. GTP-binding positions include 598–602 and 652–655; these read DTPGH and NKVD. The interval 652 to 655 is G4; sequence NKVD. Positions 688 to 690 are G5; it reads SAR.

The protein belongs to the TRAFAC class translation factor GTPase superfamily. Classic translation factor GTPase family. IF-2 subfamily.

It localises to the cytoplasm. Functionally, one of the essential components for the initiation of protein synthesis. Protects formylmethionyl-tRNA from spontaneous hydrolysis and promotes its binding to the 30S ribosomal subunits. Also involved in the hydrolysis of GTP during the formation of the 70S ribosomal complex. The sequence is that of Translation initiation factor IF-2 from Parafrankia sp. (strain EAN1pec).